The following is a 610-amino-acid chain: Ectonucleoside triphosphate diphosphohydrolase 7 (610 aa).

Residues 1–28 lie on the Cytoplasmic side of the membrane; it reads MARISFSCLFPASWHCSLPSVTQFSRQR. A helical transmembrane segment spans residues 29 to 49; that stretch reads VALLIISVAVFILVFAAVADL. Residues 50–555 are Vesicular-facing; that stretch reads QLWSSRAFRD…VSWFRISFVY (506 aa). The Proton acceptor role is filled by Glu-217. Asn-336 and Asn-400 each carry an N-linked (GlcNAc...) asparagine glycan. Cys-454 and Cys-483 form a disulfide bridge. The chain crosses the membrane as a helical span at residues 556–576; sequence NHYLFFACILVVLLSIVLYIL. At 577–610 the chain is on the cytoplasmic side; it reads RLRRIHRRQARASALDLLLMEEGVHTVLEPGIPT.

The protein belongs to the GDA1/CD39 NTPase family. Requires Ca(2+) as cofactor. Mg(2+) serves as cofactor.

The protein localises to the cytoplasmic vesicle membrane. The enzyme catalyses a ribonucleoside 5'-triphosphate + H2O = a ribonucleoside 5'-diphosphate + phosphate + H(+). The catalysed reaction is UTP + H2O = UDP + phosphate + H(+). It catalyses the reaction GTP + H2O = GDP + phosphate + H(+). It carries out the reaction CTP + H2O = CDP + phosphate + H(+). In terms of biological role, catalyzes the hydrolysis of nucleoside triphosphates and diphosphates in a calcium- or magnesium-dependent manner. Preferentially hydrolyzes nucleoside 5'-triphosphates, with substrate preference for UTP &gt; GTP &gt; CTP. Hydrolyzes ATP and nucleoside diphosphates only to a minor extent. This Xenopus tropicalis (Western clawed frog) protein is Ectonucleoside triphosphate diphosphohydrolase 7 (entpd7).